We begin with the raw amino-acid sequence, 296 residues long: Sulfotransferase 1B1 (296 aa).

Position 48 to 53 (48 to 53) interacts with 3'-phosphoadenylyl sulfate; it reads KSGTTW. 107-109 is a binding site for substrate; sequence KTH. Catalysis depends on H109, which acts as the Proton acceptor. 3'-phosphoadenylyl sulfate-binding positions include R131, S139, Y194, 228–233, and 258–260; these read TSFEMM and RKG.

The protein belongs to the sulfotransferase 1 family. As to expression, expressed highly in the colon, kidney and small intestine of male and female dogs. Highly expressed in the jejunum and ileum of the male dog than the female dog, which displayed more expression in duodenum (at protein level).

The protein localises to the cytoplasm. It carries out the reaction a phenol + 3'-phosphoadenylyl sulfate = an aryl sulfate + adenosine 3',5'-bisphosphate + H(+). The catalysed reaction is 3,3',5-triiodo-L-thyronine + 3'-phosphoadenylyl sulfate = 3,3',5-triiodo-L-thyronine sulfate + adenosine 3',5'-bisphosphate + H(+). It catalyses the reaction 3,3',5'-triiodo-L-thyronine + 3'-phosphoadenylyl sulfate = 3,3',5'-triiodo-L-thyronine sulfate + adenosine 3',5'-bisphosphate + H(+). The enzyme catalyses 3,3'-diiodo-L-thyronine + 3'-phosphoadenylyl sulfate = 3,3'-diiodo-L-thyronine sulfate + adenosine 3',5'-bisphosphate + H(+). It carries out the reaction 4-ethylphenol + 3'-phosphoadenylyl sulfate = 4-ethylphenyl sulfate + adenosine 3',5'-bisphosphate + H(+). In terms of biological role, sulfotransferase that utilizes 3'-phospho-5'-adenylyl sulfate (PAPS) as sulfonate donor to catalyze the sulfate conjugation of dopamine, small phenols such as 1-naphthol and p-nitrophenol and thyroid hormones, including 3,3'-diiodothyronine, triidothyronine (T3) and reverse triiodothyronine (rT3). May play a role in gut microbiota-host metabolic interaction. O-sulfonates 4-ethylphenol (4-EP), a dietary tyrosine-derived metabolite produced by gut bacteria. The product 4-EPS crosses the blood-brain barrier and may negatively regulate oligodendrocyte maturation and myelination, affecting the functional connectivity of different brain regions associated with the limbic system. The chain is Sulfotransferase 1B1 (SULT1B1) from Canis lupus familiaris (Dog).